The primary structure comprises 83 residues: CLAVATA3/ESR (CLE)-related protein 3 (83 aa).

An N-terminal signal peptide occupies residues Met-1–Cys-24. The stretch at Arg-38–Glu-58 forms a coiled coil. The tract at residues Met-53 to His-83 is disordered. 2 positions are modified to hydroxyproline: Pro-75 and Pro-78. Residue Pro-78 is glycosylated (O-linked (Ara...) hydroxyproline).

It belongs to the CLV3/ESR signal peptide family. The O-glycosylation (arabinosylation) of the hydroxyproline Pro-78 enhances binding affinity of the CLE3p peptide for its receptor. As to expression, mostly expressed in roots, stems and apex, and, to a lower extent, in seedlings, leaves, flowers, siliques and pollen.

It is found in the secreted. It localises to the extracellular space. Extracellular signal peptide that regulates cell fate. In Arabidopsis thaliana (Mouse-ear cress), this protein is CLAVATA3/ESR (CLE)-related protein 3.